Consider the following 398-residue polypeptide: MKRKICKALICAALATSLWAGASTKVYAWDGKIDGTGTHAMIVTQGVSILENDLSKNEPESVRKNLEILKENMHELQLGSTYPDYDKNAYDLYQDHFWDPDTDNNFSKDNSWYLAYSIPDTGESQIRKFSALARYEWQRGNYKQATFYLGEAMHYFGDIDTPYHPANVTAVDSAGHVKFETFAEERKEQYKINTAGCKTNEAFYTDILKNKDFNAWSKEYARGFAKTGKSIYYSHASMSHSWDDWDYAAKVTLANSQKGTAGYIYRFLHDVSEGNDPSVGKNVKELVAYISTSGEKDAGTDDYMYFGIKTKDGKTQEWEMDNPGNDFMTGSKDTYTFKLKDENLKIDDIQNMWIRKRKYTAFSDAYKPENIKIIANGKVVVDKDINEWISGNSTYNIK.

An N-terminal signal peptide occupies residues 1–28; sequence MKRKICKALICAALATSLWAGASTKVYA. Trp-29, His-39, Asp-84, His-96, His-154, Asp-158, His-164, His-176, and Glu-180 together coordinate Zn(2+). The region spanning 29 to 278 is the Zn-dependent PLC domain; the sequence is WDGKIDGTGT…HDVSEGNDPS (250 aa). The tract at residues 275 to 283 is linker; it reads NDPSVGKNV. The region spanning 284-398 is the PLAT domain; that stretch reads KELVAYISTS…ISGNSTYNIK (115 aa). Ca(2+)-binding residues include Asp-297, Gly-299, Thr-300, Asp-301, Asp-321, Asn-322, Gly-324, Asn-325, Asp-326, Asp-364, and Ala-365.

It belongs to the bacterial zinc-metallophospholipase C family. The cofactor is Ca(2+). Requires Zn(2+) as cofactor.

The protein resides in the secreted. It carries out the reaction a 1,2-diacyl-sn-glycero-3-phosphocholine + H2O = phosphocholine + a 1,2-diacyl-sn-glycerol + H(+). Its function is as follows. Bacterial hemolysins are exotoxins that attack blood cell membranes and cause cell rupture. Constitutes an essential virulence factor in gas gangrene. Binds to eukaryotic membranes where it hydrolyzes both phosphatidylcholine and sphingomyelin. The diacylglycerol produced can activate both the arachidonic acid pathway, leading to modulation of the inflammatory response cascade and thrombosis, and protein kinase C, leading to activation of eukaryotic phospholipases and further membrane damage. Acts on human and mouse erythrocytes, but not on rabbit or horse erythrocytes. This Clostridium perfringens (strain ATCC 13124 / DSM 756 / JCM 1290 / NCIMB 6125 / NCTC 8237 / Type A) protein is Phospholipase C (plc).